A 228-amino-acid chain; its full sequence is Death domain-containing membrane protein NRADD (228 aa).

Residues 1-52 (MLYNVSKGVVYSDTALQGQDGDREGMWVGAGGALAPNTSSLFPPEPPGASSN) lie on the Extracellular side of the membrane. N-linked (GlcNAc...) asparagine glycosylation is found at N4 and N37. The helical; Signal-anchor for type III membrane protein transmembrane segment at 53-73 (IIPVYCALLATVILGLLAYVA) threads the bilayer. Topologically, residues 74-228 (FKCWRSHKQR…SSPAESSSVV (155 aa)) are cytoplasmic. Residues 87–122 (AKARTVELGDPDRDQRRGDSNVFVDSPPSLEPCIPS) form a disordered region. Residues 90–105 (RTVELGDPDRDQRRGD) are compositionally biased toward basic and acidic residues. The 80-residue stretch at 143–222 (EEVQRLLMMG…DVVQVLSSPA (80 aa)) folds into the Death domain.

As to quaternary structure, interacts with NGFR. Interacts with NTRK1. Interacts with SORT1. In terms of tissue distribution, detected in lung and testis.

Its subcellular location is the cell membrane. The protein localises to the nucleus. Modulates NTRK1 signaling. Can activate several intracellular signaling pathways, leading to activation of JUN. Promotes apoptosis. Promotes translocation of SORT1 to the cell membrane, and thereby hinders lysosomal degradation of SOTR1 and promotes its interaction with NGFR. This chain is Death domain-containing membrane protein NRADD (Nradd), found in Mus musculus (Mouse).